The sequence spans 343 residues: tRNA N6-adenosine threonylcarbamoyltransferase (343 aa).

Positions 112 and 116 each coordinate Fe cation. Substrate-binding positions include 135 to 139, D168, G181, and N273; that span reads LVSGG. D301 is a binding site for Fe cation.

This sequence belongs to the KAE1 / TsaD family. The cofactor is Fe(2+).

The protein resides in the cytoplasm. The catalysed reaction is L-threonylcarbamoyladenylate + adenosine(37) in tRNA = N(6)-L-threonylcarbamoyladenosine(37) in tRNA + AMP + H(+). Its function is as follows. Required for the formation of a threonylcarbamoyl group on adenosine at position 37 (t(6)A37) in tRNAs that read codons beginning with adenine. Is involved in the transfer of the threonylcarbamoyl moiety of threonylcarbamoyl-AMP (TC-AMP) to the N6 group of A37, together with TsaE and TsaB. TsaD likely plays a direct catalytic role in this reaction. This Azoarcus sp. (strain BH72) protein is tRNA N6-adenosine threonylcarbamoyltransferase.